Here is a 308-residue protein sequence, read N- to C-terminus: Protoheme IX farnesyltransferase 2 (308 aa).

9 helical membrane passes run 20-40 (VTKPGIIMGNLIAVVGGFLLA), 47-67 (AVLMLATLVGLSLVVASGCAI), 92-114 (IPLKQVLGLGIALGVLGFGLLAW), 118-137 (LAALLFAAFGYLVYVGLYSL), 144-164 (VYGTLVGSLSGAVPPVVGYCA), 174-194 (LILLAMFSLWQMPHSYAIAIF), 218-238 (LHIVFYIALFALVSTLLPLAG), 240-260 (TGVGFMAVSCVTSFWWLLMAL), and 275-295 (QVFGFSILTIAILSLTMALDF).

It belongs to the UbiA prenyltransferase family. Protoheme IX farnesyltransferase subfamily.

It is found in the cell inner membrane. It catalyses the reaction heme b + (2E,6E)-farnesyl diphosphate + H2O = Fe(II)-heme o + diphosphate. The protein operates within porphyrin-containing compound metabolism; heme O biosynthesis; heme O from protoheme: step 1/1. Converts heme B (protoheme IX) to heme O by substitution of the vinyl group on carbon 2 of heme B porphyrin ring with a hydroxyethyl farnesyl side group. The polypeptide is Protoheme IX farnesyltransferase 2 (Shewanella loihica (strain ATCC BAA-1088 / PV-4)).